The primary structure comprises 287 residues: Large ribosomal subunit protein uL5m (287 aa).

A mitochondrion-targeting transit peptide spans 1–18 (MLGIRKNIRISVNFLQRR). Residues 80–89 (DEHTQKDRLP) are compositionally biased toward basic and acidic residues. The segment at 80–109 (DEHTQKDRLPRWIGDNPYYKNRPPQKMRGN) is disordered.

This sequence belongs to the universal ribosomal protein uL5 family. In terms of assembly, component of the mitochondrial large ribosomal subunit (mt-LSU). Mature yeast 74S mitochondrial ribosomes consist of a small (37S) and a large (54S) subunit. The 37S small subunit contains a 15S ribosomal RNA (15S mt-rRNA) and at least 32 different proteins. The 54S large subunit contains a 21S rRNA (21S mt-rRNA) and at least 45 different proteins. Unlike bacterial L5, uL5m does not bind zinc.

It localises to the mitochondrion. Its function is as follows. Component of the mitochondrial ribosome (mitoribosome), a dedicated translation machinery responsible for the synthesis of mitochondrial genome-encoded proteins, including at least some of the essential transmembrane subunits of the mitochondrial respiratory chain. The mitoribosomes are attached to the mitochondrial inner membrane and translation products are cotranslationally integrated into the membrane. The protein is Large ribosomal subunit protein uL5m (mrpl7) of Schizosaccharomyces pombe (strain 972 / ATCC 24843) (Fission yeast).